A 119-amino-acid chain; its full sequence is uncharacterized protein (119 aa).

Helical transmembrane passes span 61-80 (LISA…LLSV) and 87-103 (VVGV…VDII).

It is found in the membrane. This is an uncharacterized protein from Saccharomyces cerevisiae (strain ATCC 204508 / S288c) (Baker's yeast).